A 326-amino-acid chain; its full sequence is Lipoyl synthase (326 aa).

The [4Fe-4S] cluster site is built by Cys-56, Cys-61, Cys-67, Cys-82, Cys-86, Cys-89, and Ser-298. Residues 68–287 enclose the Radical SAM core domain; the sequence is WEDREATFLI…KDEADAIGYS (220 aa).

Belongs to the radical SAM superfamily. Lipoyl synthase family. [4Fe-4S] cluster is required as a cofactor.

The protein localises to the cytoplasm. The catalysed reaction is [[Fe-S] cluster scaffold protein carrying a second [4Fe-4S](2+) cluster] + N(6)-octanoyl-L-lysyl-[protein] + 2 oxidized [2Fe-2S]-[ferredoxin] + 2 S-adenosyl-L-methionine + 4 H(+) = [[Fe-S] cluster scaffold protein] + N(6)-[(R)-dihydrolipoyl]-L-lysyl-[protein] + 4 Fe(3+) + 2 hydrogen sulfide + 2 5'-deoxyadenosine + 2 L-methionine + 2 reduced [2Fe-2S]-[ferredoxin]. The protein operates within protein modification; protein lipoylation via endogenous pathway; protein N(6)-(lipoyl)lysine from octanoyl-[acyl-carrier-protein]: step 2/2. Its function is as follows. Catalyzes the radical-mediated insertion of two sulfur atoms into the C-6 and C-8 positions of the octanoyl moiety bound to the lipoyl domains of lipoate-dependent enzymes, thereby converting the octanoylated domains into lipoylated derivatives. In Streptomyces griseus subsp. griseus (strain JCM 4626 / CBS 651.72 / NBRC 13350 / KCC S-0626 / ISP 5235), this protein is Lipoyl synthase.